The primary structure comprises 452 residues: AP-4 complex subunit mu-1 (452 aa).

The MHD domain maps to 184–451; sequence KNEVFLDVVE…LSHSDAYVIR (268 aa).

This sequence belongs to the adaptor complexes medium subunit family. Adaptor protein complex 4 (AP-4) is a heterotetramer composed of two large adaptins (epsilon-type subunit AP4E1 and beta-type subunit AP4B1), a medium adaptin (mu-type subunit AP4M1) and a small adaptin (sigma-type AP4S1). Interacts with tyrosine-based sorting signals on the cytoplasmic tail of cargo proteins such as APP, ATG9A, LAMP2 and NAGPA. Interacts with the C-terminal domain of GRID2. Interacts with GRIA1 and GRIA2; the interaction is indirect via CACNG3. Interacts with CACNG3; CACNG3 associates GRIA1 and GRIA2 with the adaptor protein complex 4 (AP-4) to target them to the somatodendritic compartment of neurons. Interacts with HOOK1 and HOOK2; the interactions are direct, mediate the interaction between FTS-Hook-FHIP (FHF) complex and AP-4 and the perinuclear distribution of AP-4.

The protein localises to the golgi apparatus. It localises to the trans-Golgi network membrane. It is found in the early endosome. Its function is as follows. Component of the adaptor protein complex 4 (AP-4). Adaptor protein complexes are vesicle coat components involved both in vesicle formation and cargo selection. They control the vesicular transport of proteins in different trafficking pathways. AP-4 forms a non clathrin-associated coat on vesicles departing the trans-Golgi network (TGN) and may be involved in the targeting of proteins from the trans-Golgi network (TGN) to the endosomal-lysosomal system. It is also involved in protein sorting to the basolateral membrane in epithelial cells and the proper asymmetric localization of somatodendritic proteins in neurons. Within AP-4, the mu-type subunit AP4M1 is directly involved in the recognition and binding of tyrosine-based sorting signals found in the cytoplasmic part of cargos. The adaptor protein complex 4 (AP-4) may also recognize other types of sorting signal. In Bos taurus (Bovine), this protein is AP-4 complex subunit mu-1.